The following is a 64-amino-acid chain: UPF0434 protein Bmul_0750/BMULJ_02510 (64 aa).

Belongs to the UPF0434 family.

The polypeptide is UPF0434 protein Bmul_0750/BMULJ_02510 (Burkholderia multivorans (strain ATCC 17616 / 249)).